The following is an 846-amino-acid chain: Auxin response factor 2A (846 aa).

The segment covering 1 to 12 has biased composition (polar residues); it reads MAASEVSIQGYS. A disordered region spans residues 1–30; it reads MAASEVSIQGYSEPSDGSRPVSETGRSSSG. Positions 146-248 form a DNA-binding region, TF-B3; sequence FCKTLTASDT…ELRVGVRRAM (103 aa). Disordered stretches follow at residues 380–423 and 660–693; these read PPAL…HSQA and DMNI…GVAA. 2 stretches are compositionally biased toward polar residues: residues 398–408 and 414–423; these read ILPTSPDSSVL and SRATADHSQA. Residues 675–693 are compositionally biased toward basic and acidic residues; sequence SDQRSEQSKGSKVDDGVAA. In terms of domain architecture, PB1 spans 720–804; it reads RSCTKVHKQG…RKIFIYTKEE (85 aa). Polar residues-rich tracts occupy residues 809-824 and 836-846; these read NPGT…SSVA and QLPSESGQAES. The segment at 809 to 846 is disordered; the sequence is NPGTLNSKGEDTSSVAEGSDAKEVKNLQLPSESGQAES.

It belongs to the ARF family. As to quaternary structure, homodimers and heterodimers. Interacts with ASR1. Expressed in root, leaf and flower. Expressed in flower buds about three days before opening including ovary, petal and sepal with the highest in stamen. Expressed in stem. Expressed in fruit. Expressed in seeds.

The protein resides in the nucleus. In terms of biological role, auxin response factors (ARFs) are transcriptional factors that bind specifically to the DNA sequence 5'-TGTCTC-3' found in the auxin-responsive promoter elements (AuxREs). Could act as transcriptional activator or repressor. Involved in the control of fruit ripening process. Regulates expression of a number of ripening regulators, transcription factors, and ethylene biosynthesis and signaling components. May act as a transcriptional repressor of auxin-responsive genes. Regulates vegetative growth, lateral root formation and flower organ senescence, possibly partially by regulating gene expression of auxin and ethylene response factor (ERF) genes. Plays a negative role in axillary shoot meristem formation. This chain is Auxin response factor 2A, found in Solanum lycopersicum (Tomato).